Reading from the N-terminus, the 249-residue chain is Probable transcriptional regulatory protein Psyc_0938 (249 aa).

It belongs to the TACO1 family.

It is found in the cytoplasm. In Psychrobacter arcticus (strain DSM 17307 / VKM B-2377 / 273-4), this protein is Probable transcriptional regulatory protein Psyc_0938.